A 91-amino-acid chain; its full sequence is Probable Fe(2+)-trafficking protein (91 aa).

It belongs to the Fe(2+)-trafficking protein family.

In terms of biological role, could be a mediator in iron transactions between iron acquisition and iron-requiring processes, such as synthesis and/or repair of Fe-S clusters in biosynthetic enzymes. The polypeptide is Probable Fe(2+)-trafficking protein (Cupriavidus metallidurans (strain ATCC 43123 / DSM 2839 / NBRC 102507 / CH34) (Ralstonia metallidurans)).